A 472-amino-acid chain; its full sequence is tRNA-2-methylthio-N(6)-dimethylallyladenosine synthase (472 aa).

The MTTase N-terminal domain maps to 22–142 (RKVFVKTYGC…LPDALKRARA (121 aa)). 6 residues coordinate [4Fe-4S] cluster: Cys31, Cys67, Cys105, Cys183, Cys187, and Cys190. One can recognise a Radical SAM core domain in the interval 169-403 (RARGVTAFLT…LLVKQQRGFA (235 aa)). Positions 404 to 466 (EACVGREIDL…PNSLFAEMIG (63 aa)) constitute a TRAM domain.

It belongs to the methylthiotransferase family. MiaB subfamily. In terms of assembly, monomer. It depends on [4Fe-4S] cluster as a cofactor.

The protein resides in the cytoplasm. The catalysed reaction is N(6)-dimethylallyladenosine(37) in tRNA + (sulfur carrier)-SH + AH2 + 2 S-adenosyl-L-methionine = 2-methylsulfanyl-N(6)-dimethylallyladenosine(37) in tRNA + (sulfur carrier)-H + 5'-deoxyadenosine + L-methionine + A + S-adenosyl-L-homocysteine + 2 H(+). Functionally, catalyzes the methylthiolation of N6-(dimethylallyl)adenosine (i(6)A), leading to the formation of 2-methylthio-N6-(dimethylallyl)adenosine (ms(2)i(6)A) at position 37 in tRNAs that read codons beginning with uridine. In Rhizobium meliloti (strain 1021) (Ensifer meliloti), this protein is tRNA-2-methylthio-N(6)-dimethylallyladenosine synthase.